The following is an 865-amino-acid chain: Xylosyltransferase 2 (865 aa).

Topologically, residues 1–15 (MVASARVQKLVRRYK) are cytoplasmic. A helical; Signal-anchor for type II membrane protein membrane pass occupies residues 16 to 36 (LAIATALAILLLQGLVVWSFS). Residues 37–865 (GLEEDEAGEK…GPVKADGRLR (829 aa)) lie on the Lumenal side of the membrane. Residues 41–157 (DEAGEKGRQR…EGAPQPTDNG (117 aa)) form a disordered region. A compositionally biased stretch (basic and acidic residues) spans 53-65 (RPLDPGEGSKDTD). Basic residues predominate over residues 73 to 82 (STGRRHGRWR). Asn122 is a glycosylation site (N-linked (GlcNAc...) asparagine). Low complexity predominate over residues 125 to 137 (GAAAGEALVGAAG). Disulfide bonds link Cys162–Cys190, Cys206–Cys448, Cys467–Cys480, and Cys469–Cys478. Residues Val239, Asp267, and 296–298 (TIW) contribute to the UDP-alpha-D-xylose site. Asn327 is a glycosylation site (N-linked (GlcNAc...) asparagine). 400-401 (DW) lines the UDP-alpha-D-xylose pocket. UDP-alpha-D-xylose is bound by residues Ser481 and 504-505 (RK). Disulfide bonds link Cys581/Cys833 and Cys826/Cys839. Asn683 carries an N-linked (GlcNAc...) asparagine glycan. A disordered region spans residues 846 to 865 (SLSPDPKSELGPVKADGRLR).

It belongs to the glycosyltransferase 14 family. XylT subfamily. As to quaternary structure, monomer. The cofactor is Mg(2+). Requires Mn(2+) as cofactor. In terms of processing, contains disulfide bonds. Widely expressed. Expressed at higher level in kidney and pancreas.

It localises to the golgi apparatus membrane. Its subcellular location is the secreted. It carries out the reaction UDP-alpha-D-xylose + L-seryl-[protein] = 3-O-(beta-D-xylosyl)-L-seryl-[protein] + UDP + H(+). Its pathway is glycan metabolism; chondroitin sulfate biosynthesis. It functions in the pathway glycan metabolism; heparan sulfate biosynthesis. Functionally, catalyzes the first step in the biosynthesis of chondroitin sulfate, heparan sulfate and dermatan sulfate proteoglycans, such as DCN. Transfers D-xylose from UDP-D-xylose to specific serine residues of the core protein. This is Xylosyltransferase 2 (XYLT2) from Homo sapiens (Human).